A 354-amino-acid chain; its full sequence is Homeobox protein Nkx-2.4 (354 aa).

A DNA-binding region (homeobox) is located at residues 188–247; the sequence is RRKRRVLFSQAQVYELERRFKQQKYLSAPEREHLASMIHLTPTQVKIWFQNHRYKMKRQA. Residues 245–329 form a disordered region; that stretch reads RQAKDKAAQQ…PALHGPGGGL (85 aa). The span at 262–272 shows a compositional bias: pro residues; that stretch reads GPPPPPPPPSP. Residues 290–304 are compositionally biased toward low complexity; the sequence is GAGTPTPGQGGQQPQ.

It belongs to the NK-2 homeobox family. In terms of tissue distribution, in the embryo it is detected in the posterior hypothalamus and later in the head. In the adult it is detected only in testis.

The protein localises to the nucleus. Probable transcription factor. This Mus musculus (Mouse) protein is Homeobox protein Nkx-2.4 (Nkx2-4).